A 299-amino-acid polypeptide reads, in one-letter code: ATP phosphoribosyltransferase (299 aa).

It belongs to the ATP phosphoribosyltransferase family. Long subfamily. Mg(2+) serves as cofactor.

The protein localises to the cytoplasm. It carries out the reaction 1-(5-phospho-beta-D-ribosyl)-ATP + diphosphate = 5-phospho-alpha-D-ribose 1-diphosphate + ATP. It participates in amino-acid biosynthesis; L-histidine biosynthesis; L-histidine from 5-phospho-alpha-D-ribose 1-diphosphate: step 1/9. Its activity is regulated as follows. Feedback inhibited by histidine. Its function is as follows. Catalyzes the condensation of ATP and 5-phosphoribose 1-diphosphate to form N'-(5'-phosphoribosyl)-ATP (PR-ATP). Has a crucial role in the pathway because the rate of histidine biosynthesis seems to be controlled primarily by regulation of HisG enzymatic activity. This Campylobacter jejuni subsp. jejuni serotype O:23/36 (strain 81-176) protein is ATP phosphoribosyltransferase.